The primary structure comprises 308 residues: GTP-binding protein RAD (308 aa).

Residues Met-1 to Ala-15 show a composition bias toward gly residues. The tract at residues Met-1 to Gly-86 is disordered. Residue Arg-24 is modified to Omega-N-methylarginine. Ser-26 bears the Phosphoserine mark. Positions Ala-57 to Ser-82 are enriched in low complexity. Residues Gly-98–Ser-105 and Asn-203–Asp-206 contribute to the GTP site. Positions Ala-278 to Ala-297 are calmodulin-binding.

The protein belongs to the small GTPase superfamily. RGK family. As to quaternary structure, interacts with Calmodulin preferentially in the inactive, GDP-bound form. Interacts with CAMK2D. Interacts with CACNB2; interaction may be involved in beta-adrenergic regulation of heart rate and contractile force. Interaction with CACNB2 regulates the trafficking of CACNA1C to the cell membrane. Phosphorylation at Ser-26, Ser-39, Ser-273 and Ser-301 may be involved in regulating inhibition of voltage-gated L-type Ca(2+) channels.

The protein localises to the cell membrane. May regulate basal voltage-dependent L-type Ca(2+) currents and be required for beta-adrenergic augmentation of Ca(2+) influx in cardiomyocytes, thereby regulating increases in heart rate and contractile force. May play an important role in cardiac antiarrhythmia via the strong suppression of voltage-dependent L-type Ca(2+) currents. Regulates voltage-gated L-type calcium channel subunit alpha-1C trafficking to the cell membrane. Inhibits cardiac hypertrophy through the calmodulin-dependent kinase II (CaMKII) pathway. Inhibits phosphorylation and activation of CAMK2D. This chain is GTP-binding protein RAD (Rrad), found in Mus musculus (Mouse).